The following is a 228-amino-acid chain: Large ribosomal subunit protein bL25 (228 aa).

Residues 1 to 10 are compositionally biased toward polar residues; that stretch reads MNSLDANTRN. Disordered stretches follow at residues 1–20 and 187–228; these read MNSL…VRSL and MKEP…EEKK. Basic and acidic residues predominate over residues 202–228; sequence EDGKEAAPAAEGDKKDDGEKKATEEKK.

This sequence belongs to the bacterial ribosomal protein bL25 family. CTC subfamily. In terms of assembly, part of the 50S ribosomal subunit; part of the 5S rRNA/L5/L18/L25 subcomplex. Contacts the 5S rRNA. Binds to the 5S rRNA independently of L5 and L18.

In terms of biological role, this is one of the proteins that binds to the 5S RNA in the ribosome where it forms part of the central protuberance. This chain is Large ribosomal subunit protein bL25, found in Pelagibacter ubique (strain HTCC1062).